The chain runs to 864 residues: Sine oculis-binding protein homolog (864 aa).

Residues 1-14 are compositionally biased toward basic and acidic residues; that stretch reads MAEMEKEGRPPENK. The tract at residues 1–25 is disordered; sequence MAEMEKEGRPPENKRSRKPAHPVKR. 2 consecutive FCS-type zinc fingers follow at residues 142–180 and 216–256; these read DEVS…KCFA and FKNN…KCLN. Disordered stretches follow at residues 304–360, 413–484, and 550–616; these read LTDA…ETPS, RGPP…PGAP, and KPPN…RGRG. Composition is skewed to low complexity over residues 314–335 and 417–433; these read PVAA…VSPS and HHAS…MLPG. A compositionally biased stretch (pro residues) spans 460–484; it reads IHPPSTPTMPGNPPGLLPPPPPGAP. 2 stretches are compositionally biased toward low complexity: residues 565 to 582 and 590 to 603; these read SAPG…GRSL and GSSK…GSSG. Residues 618-622 carry the SUMO interaction motif 1 (SIM); mediates the binding to polysumoylated substrates motif; that stretch reads VVDLT. S627 is modified (phosphoserine). Residues 648-652 carry the SUMO interaction motif 2 (SIM); mediates the binding to polysumoylated substrates motif; that stretch reads VIDLT. A Glycyl lysine isopeptide (Lys-Gly) (interchain with G-Cter in SUMO2) cross-link involves residue K672. S694 is subject to Phosphoserine. The tract at residues 725-750 is disordered; the sequence is APAEAKGAEPPPEQPPPPAPPKKLLS. Positions 733–745 are enriched in pro residues; that stretch reads EPPPEQPPPPAPP.

Belongs to the SOBP family. As to quaternary structure, interacts (via SIM domains) with SUMO1 and SUMO2.

Functionally, implicated in development of the cochlea. This Rattus norvegicus (Rat) protein is Sine oculis-binding protein homolog.